We begin with the raw amino-acid sequence, 206 residues long: dTTP/UTP pyrophosphatase (206 aa).

Asp79 acts as the Proton acceptor in catalysis.

Belongs to the Maf family. YhdE subfamily. It depends on a divalent metal cation as a cofactor.

It is found in the cytoplasm. It catalyses the reaction dTTP + H2O = dTMP + diphosphate + H(+). The catalysed reaction is UTP + H2O = UMP + diphosphate + H(+). Its function is as follows. Nucleoside triphosphate pyrophosphatase that hydrolyzes dTTP and UTP. May have a dual role in cell division arrest and in preventing the incorporation of modified nucleotides into cellular nucleic acids. The protein is dTTP/UTP pyrophosphatase of Rhizobium johnstonii (strain DSM 114642 / LMG 32736 / 3841) (Rhizobium leguminosarum bv. viciae).